The chain runs to 392 residues: Na(+)/H(+) antiporter NhaA (392 aa).

Transmembrane regions (helical) follow at residues 14–34 (AGGLILIFAAVVALFMANSPL), 59–79 (LLLWINDGLMAIFFLVVGLEV), 95–115 (IFPAIAALGGMLAPALIYLLF), 125–145 (GWAIPAATDIAFALGVMALLG), 154–174 (VFLLALAIIDDLGVIIIIALF), 179–199 (VSLQALGMAAAAIALLGYMNW), 213–233 (LVLWVCILKSGVHATLAGVIV), 254–274 (GLHPWVAYLILPLFAFANAGV), 287–307 (LLPLGIASGLFIGKPLGIFLF), 328–348 (IFAVSVLCGIGFTMSIFIASL), and 363–383 (LGILLGSTTAAVVGYSLLRLA).

It belongs to the NhaA Na(+)/H(+) (TC 2.A.33) antiporter family.

The protein resides in the cell inner membrane. The enzyme catalyses Na(+)(in) + 2 H(+)(out) = Na(+)(out) + 2 H(+)(in). In terms of biological role, na(+)/H(+) antiporter that extrudes sodium in exchange for external protons. In Yersinia enterocolitica serotype O:8 / biotype 1B (strain NCTC 13174 / 8081), this protein is Na(+)/H(+) antiporter NhaA.